Here is a 267-residue protein sequence, read N- to C-terminus: Tryptophan synthase alpha chain (267 aa).

Catalysis depends on proton acceptor residues Glu-49 and Asp-60.

It belongs to the TrpA family. Tetramer of two alpha and two beta chains.

It carries out the reaction (1S,2R)-1-C-(indol-3-yl)glycerol 3-phosphate + L-serine = D-glyceraldehyde 3-phosphate + L-tryptophan + H2O. It participates in amino-acid biosynthesis; L-tryptophan biosynthesis; L-tryptophan from chorismate: step 5/5. Its function is as follows. The alpha subunit is responsible for the aldol cleavage of indoleglycerol phosphate to indole and glyceraldehyde 3-phosphate. This chain is Tryptophan synthase alpha chain, found in Acidothermus cellulolyticus (strain ATCC 43068 / DSM 8971 / 11B).